Consider the following 282-residue polypeptide: Pantothenate synthetase (282 aa).

30–37 (MGYLHEGH) contributes to the ATP binding site. Histidine 37 acts as the Proton donor in catalysis. Glutamine 61 lines the (R)-pantoate pocket. Glutamine 61 lines the beta-alanine pocket. 147–150 (GMKD) provides a ligand contact to ATP. Glutamine 153 serves as a coordination point for (R)-pantoate. ATP contacts are provided by residues valine 176 and 184 to 187 (KSSR).

The protein belongs to the pantothenate synthetase family. Homodimer.

Its subcellular location is the cytoplasm. The enzyme catalyses (R)-pantoate + beta-alanine + ATP = (R)-pantothenate + AMP + diphosphate + H(+). It functions in the pathway cofactor biosynthesis; (R)-pantothenate biosynthesis; (R)-pantothenate from (R)-pantoate and beta-alanine: step 1/1. In terms of biological role, catalyzes the condensation of pantoate with beta-alanine in an ATP-dependent reaction via a pantoyl-adenylate intermediate. The polypeptide is Pantothenate synthetase (Bacillus mycoides (strain KBAB4) (Bacillus weihenstephanensis)).